A 352-amino-acid chain; its full sequence is Selenide, water dikinase (352 aa).

Cysteine 23 is a catalytic residue. Residues lysine 26 and 54–56 each bind ATP; that span reads SRD. Aspartate 57 contacts Mg(2+). ATP contacts are provided by residues aspartate 74, aspartate 97, and 145–147; that span reads GHS. A Mg(2+)-binding site is contributed by aspartate 97. Residue aspartate 233 participates in Mg(2+) binding.

The protein belongs to the selenophosphate synthase 1 family. Class I subfamily. Homodimer. It depends on Mg(2+) as a cofactor.

It catalyses the reaction hydrogenselenide + ATP + H2O = selenophosphate + AMP + phosphate + 2 H(+). Its function is as follows. Synthesizes selenophosphate from selenide and ATP. This Shewanella baltica (strain OS155 / ATCC BAA-1091) protein is Selenide, water dikinase.